A 239-amino-acid polypeptide reads, in one-letter code: Ribonuclease PH (239 aa).

Phosphate contacts are provided by residues Arg-86 and 124–126 (GTR).

The protein belongs to the RNase PH family. Homohexameric ring arranged as a trimer of dimers.

The catalysed reaction is tRNA(n+1) + phosphate = tRNA(n) + a ribonucleoside 5'-diphosphate. Functionally, phosphorolytic 3'-5' exoribonuclease that plays an important role in tRNA 3'-end maturation. Removes nucleotide residues following the 3'-CCA terminus of tRNAs; can also add nucleotides to the ends of RNA molecules by using nucleoside diphosphates as substrates, but this may not be physiologically important. Probably plays a role in initiation of 16S rRNA degradation (leading to ribosome degradation) during starvation. In Rickettsia africae (strain ESF-5), this protein is Ribonuclease PH.